Consider the following 70-residue polypeptide: Protein SlyX homolog (70 aa).

The interval 51–70 (RMREAEANRPGPTNEPPPHY) is disordered.

This sequence belongs to the SlyX family.

This Nitrobacter hamburgensis (strain DSM 10229 / NCIMB 13809 / X14) protein is Protein SlyX homolog.